A 266-amino-acid polypeptide reads, in one-letter code: Interleukin-1 beta (266 aa).

A propeptide spanning residues 1-113 (MATVPEPINE…ETSSDELLCD (113 aa)) is cleaved from the precursor.

It belongs to the IL-1 family. Monomer. In its precursor form, weakly interacts with full-length MEFV; the mature cytokine does not interact at all. Interacts with integrins ITGAV:ITGBV and ITGA5:ITGB1; integrin-binding is required for IL1B signaling. Interacts with cargo receptor TMED10; the interaction is direct and is required for the secretion of IL1B mature form. Interacts with HSP90AB1; the interaction facilitates cargo translocation into the ERGIC. Interacts with HSP90B1; the interaction facilitates cargo translocation into the ERGIC.

Its subcellular location is the cytoplasm. The protein resides in the cytosol. It localises to the secreted. The protein localises to the lysosome. It is found in the extracellular exosome. In terms of biological role, potent pro-inflammatory cytokine. Initially discovered as the major endogenous pyrogen, induces prostaglandin synthesis, neutrophil influx and activation, T-cell activation and cytokine production, B-cell activation and antibody production, and fibroblast proliferation and collagen production. Promotes Th17 differentiation of T-cells. Synergizes with IL12/interleukin-12 to induce IFNG synthesis from T-helper 1 (Th1) cells. Plays a role in angiogenesis by inducing VEGF production synergistically with TNF and IL6. Involved in transduction of inflammation downstream of pyroptosis: its mature form is specifically released in the extracellular milieu by passing through the gasdermin-D (GSDMD) pore. The protein is Interleukin-1 beta (IL1B) of Ovis aries (Sheep).